A 338-amino-acid polypeptide reads, in one-letter code: D-erythrose-4-phosphate dehydrogenase (338 aa).

11–12 (RI) provides a ligand contact to NAD(+). Residues 153–155 (SCT), R199, 212–213 (TK), and R235 contribute to the substrate site. C154 functions as the Nucleophile in the catalytic mechanism. Residue N317 participates in NAD(+) binding.

Belongs to the glyceraldehyde-3-phosphate dehydrogenase family. Epd subfamily. In terms of assembly, homotetramer.

The protein localises to the cytoplasm. The catalysed reaction is D-erythrose 4-phosphate + NAD(+) + H2O = 4-phospho-D-erythronate + NADH + 2 H(+). It participates in cofactor biosynthesis; pyridoxine 5'-phosphate biosynthesis; pyridoxine 5'-phosphate from D-erythrose 4-phosphate: step 1/5. Functionally, catalyzes the NAD-dependent conversion of D-erythrose 4-phosphate to 4-phosphoerythronate. This is D-erythrose-4-phosphate dehydrogenase from Shewanella loihica (strain ATCC BAA-1088 / PV-4).